Consider the following 496-residue polypeptide: Alpha-amylase (496 aa).

Cys29 and Cys85 are joined by a disulfide. Residues Asn99, Arg155, and Asp164 each contribute to the Ca(2+) site. Arg192 contributes to the chloride binding site. The active-site Nucleophile is Asp194. His198 contacts Ca(2+). The active-site Proton donor is Glu230. Residue Arg332 participates in chloride binding. Intrachain disulfides connect Cys374–Cys380 and Cys448–Cys460.

This sequence belongs to the glycosyl hydrolase 13 family. In terms of assembly, monomer. Ca(2+) serves as cofactor. Chloride is required as a cofactor. In terms of processing, disulfide bonds are present.

It is found in the secreted. It carries out the reaction Endohydrolysis of (1-&gt;4)-alpha-D-glucosidic linkages in polysaccharides containing three or more (1-&gt;4)-alpha-linked D-glucose units.. Inhibited by alpha-amylase inhibitors from wheat and rye. The most effective inhibitors are the wheat tetrameric alpha-amylase inhibitor (WTAI) and the rye dimeric alpha-amylase inhibitor (RDAI-1). Not inhibited by alpha-amylase inhibitor from barley. Its function is as follows. Aids in the digestion of starch and glycogen derived from food, such as skin scales, fungi and bacteria. This chain is Alpha-amylase, found in Dermatophagoides pteronyssinus (European house dust mite).